The primary structure comprises 338 residues: Aspartate-semialdehyde dehydrogenase (338 aa).

Residues 13–16 (TGNV) and 41–42 (NS) each bind NADP(+). Position 101 (arginine 101) interacts with phosphate. Catalysis depends on cysteine 132, which acts as the Acyl-thioester intermediate. Glutamine 159 lines the substrate pocket. An NADP(+)-binding site is contributed by 162–163 (SG). Lysine 216 is a phosphate binding site. Arginine 237 provides a ligand contact to substrate. Catalysis depends on histidine 244, which acts as the Proton acceptor. NADP(+) is bound at residue asparagine 317.

It belongs to the aspartate-semialdehyde dehydrogenase family. In terms of assembly, homodimer.

The catalysed reaction is L-aspartate 4-semialdehyde + phosphate + NADP(+) = 4-phospho-L-aspartate + NADPH + H(+). It participates in amino-acid biosynthesis; L-lysine biosynthesis via DAP pathway; (S)-tetrahydrodipicolinate from L-aspartate: step 2/4. It functions in the pathway amino-acid biosynthesis; L-methionine biosynthesis via de novo pathway; L-homoserine from L-aspartate: step 2/3. Its pathway is amino-acid biosynthesis; L-threonine biosynthesis; L-threonine from L-aspartate: step 2/5. Its function is as follows. Catalyzes the NADPH-dependent formation of L-aspartate-semialdehyde (L-ASA) by the reductive dephosphorylation of L-aspartyl-4-phosphate. This chain is Aspartate-semialdehyde dehydrogenase, found in Rickettsia bellii (strain RML369-C).